A 171-amino-acid polypeptide reads, in one-letter code: MKAIKKEFNKKAPLLEEKVVKINRITKVVKGGARFRFSALVVVGDKKGQIGFATAKAKEIVEAIKKALEKAKKQLVRIPITGTTIPHDTIGRFGASKFFLKPASKGTGIVAGGKAARTILELVGINDVLTKTFGSRTSINVIRAVMDGLQSLRTKEEVAKLRGITLAKKEQ.

The S5 DRBM domain maps to 15–78; it reads LEEKVVKINR…EKAKKQLVRI (64 aa).

Belongs to the universal ribosomal protein uS5 family. Part of the 30S ribosomal subunit. Contacts proteins S4 and S8.

In terms of biological role, with S4 and S12 plays an important role in translational accuracy. Functionally, located at the back of the 30S subunit body where it stabilizes the conformation of the head with respect to the body. This is Small ribosomal subunit protein uS5 from Onion yellows phytoplasma (strain OY-M).